We begin with the raw amino-acid sequence, 739 residues long: Phosphoribosylformylglycinamidine synthase subunit PurL (739 aa).

Residue His-54 is part of the active site. 2 residues coordinate ATP: Tyr-57 and Lys-96. Glu-98 contacts Mg(2+). Residues Ser-99–His-102 and Arg-121 contribute to the substrate site. The active-site Proton acceptor is the His-100. Mg(2+) is bound at residue Asp-122. Gln-245 serves as a coordination point for substrate. Residue Asp-273 participates in Mg(2+) binding. A substrate-binding site is contributed by Glu-317 to Gln-319. Asp-500 and Gly-537 together coordinate ATP. Asn-538 provides a ligand contact to Mg(2+). A substrate-binding site is contributed by Ser-540.

The protein belongs to the FGAMS family. In terms of assembly, monomer. Part of the FGAM synthase complex composed of 1 PurL, 1 PurQ and 2 PurS subunits.

The protein localises to the cytoplasm. The catalysed reaction is N(2)-formyl-N(1)-(5-phospho-beta-D-ribosyl)glycinamide + L-glutamine + ATP + H2O = 2-formamido-N(1)-(5-O-phospho-beta-D-ribosyl)acetamidine + L-glutamate + ADP + phosphate + H(+). The protein operates within purine metabolism; IMP biosynthesis via de novo pathway; 5-amino-1-(5-phospho-D-ribosyl)imidazole from N(2)-formyl-N(1)-(5-phospho-D-ribosyl)glycinamide: step 1/2. Part of the phosphoribosylformylglycinamidine synthase complex involved in the purines biosynthetic pathway. Catalyzes the ATP-dependent conversion of formylglycinamide ribonucleotide (FGAR) and glutamine to yield formylglycinamidine ribonucleotide (FGAM) and glutamate. The FGAM synthase complex is composed of three subunits. PurQ produces an ammonia molecule by converting glutamine to glutamate. PurL transfers the ammonia molecule to FGAR to form FGAM in an ATP-dependent manner. PurS interacts with PurQ and PurL and is thought to assist in the transfer of the ammonia molecule from PurQ to PurL. In Bacillus mycoides (strain KBAB4) (Bacillus weihenstephanensis), this protein is Phosphoribosylformylglycinamidine synthase subunit PurL.